We begin with the raw amino-acid sequence, 176 residues long: NAD(P)H-quinone oxidoreductase subunit 6, chloroplastic (176 aa).

A run of 5 helical transmembrane segments spans residues 10-30 (FLLVFLGSGLILGALGVVLFT), 33-53 (IFSAFSLGLVLVCISLFYILA), 63-83 (LLIYVGAINVLIIFSVMFMSG), 105-125 (ISLFVSLISTILNTSWYGIIW), and 152-172 (FFLPFELISIILLVSLIGAIA).

This sequence belongs to the complex I subunit 6 family. NDH is composed of at least 16 different subunits, 5 of which are encoded in the nucleus.

The protein resides in the plastid. It is found in the chloroplast thylakoid membrane. The catalysed reaction is a plastoquinone + NADH + (n+1) H(+)(in) = a plastoquinol + NAD(+) + n H(+)(out). It carries out the reaction a plastoquinone + NADPH + (n+1) H(+)(in) = a plastoquinol + NADP(+) + n H(+)(out). Functionally, NDH shuttles electrons from NAD(P)H:plastoquinone, via FMN and iron-sulfur (Fe-S) centers, to quinones in the photosynthetic chain and possibly in a chloroplast respiratory chain. The immediate electron acceptor for the enzyme in this species is believed to be plastoquinone. Couples the redox reaction to proton translocation, and thus conserves the redox energy in a proton gradient. The chain is NAD(P)H-quinone oxidoreductase subunit 6, chloroplastic (ndhG) from Spinacia oleracea (Spinach).